The sequence spans 119 residues: Protein TusC (119 aa).

The protein belongs to the DsrF/TusC family. In terms of assembly, heterohexamer, formed by a dimer of trimers. The hexameric TusBCD complex contains 2 copies each of TusB, TusC and TusD. The TusBCD complex interacts with TusE.

The protein resides in the cytoplasm. Functionally, part of a sulfur-relay system required for 2-thiolation of 5-methylaminomethyl-2-thiouridine (mnm(5)s(2)U) at tRNA wobble positions. The protein is Protein TusC of Escherichia coli O8 (strain IAI1).